The chain runs to 332 residues: Endonuclease 8-like 2 (332 aa).

Pro2 acts as the Schiff-base intermediate with DNA in catalysis. The Proton donor role is filled by Glu3. Lys50 (proton donor; for beta-elimination activity) is an active-site residue. Lys50 is modified (N6-acetyllysine). The disordered stretch occupies residues 59–121 (DEEMGPPGSS…EDDSEYLERD (63 aa)). Ser68 is subject to Phosphoserine. Basic and acidic residues predominate over residues 74–84 (PQKEVQKEGAA). The span at 94–104 (GQKTLDGSSRS) shows a compositional bias: polar residues. Lys154 carries the N6-acetyllysine modification. Position 231 (Asn231) interacts with DNA. The FPG-type zinc finger occupies 284–320 (QVYQKEQCPAGHQVMKEAFGPEDGLQRLTWWCPQCQP). Arg310 (proton donor; for delta-elimination activity) is an active-site residue.

Belongs to the FPG family. Binds EP300. In terms of tissue distribution, detected in testis, skeletal muscle, heart, brain, placenta, lung, pancreas, kidney and liver.

The protein resides in the nucleus. It catalyses the reaction 2'-deoxyribonucleotide-(2'-deoxyribose 5'-phosphate)-2'-deoxyribonucleotide-DNA = a 3'-end 2'-deoxyribonucleotide-(2,3-dehydro-2,3-deoxyribose 5'-phosphate)-DNA + a 5'-end 5'-phospho-2'-deoxyribonucleoside-DNA + H(+). Acetylation of Lys-50 leads to loss of DNA nicking activity. Acetylation of Lys-154 has no effect. In terms of biological role, involved in base excision repair of DNA damaged by oxidation or by mutagenic agents. Has DNA glycosylase activity towards 5-hydroxyuracil and other oxidized derivatives of cytosine with a preference for mismatched double-stranded DNA (DNA bubbles). Has low or no DNA glycosylase activity towards thymine glycol, 2-hydroxyadenine, hypoxanthine and 8-oxoguanine. Has AP (apurinic/apyrimidinic) lyase activity and introduces nicks in the DNA strand. Cleaves the DNA backbone by beta-delta elimination to generate a single-strand break at the site of the removed base with both 3'- and 5'-phosphates. This chain is Endonuclease 8-like 2 (NEIL2), found in Homo sapiens (Human).